A 423-amino-acid polypeptide reads, in one-letter code: Lipoyl synthase 1, mitochondrial (423 aa).

7 residues coordinate [4Fe-4S] cluster: cysteine 127, cysteine 132, cysteine 138, cysteine 159, cysteine 163, cysteine 166, and serine 375. A Radical SAM core domain is found at 142 to 364 (DEEEGTATAT…EEEAMAMGFL (223 aa)).

This sequence belongs to the radical SAM superfamily. Lipoyl synthase family. [4Fe-4S] cluster serves as cofactor.

The protein localises to the mitochondrion. The enzyme catalyses [[Fe-S] cluster scaffold protein carrying a second [4Fe-4S](2+) cluster] + N(6)-octanoyl-L-lysyl-[protein] + 2 oxidized [2Fe-2S]-[ferredoxin] + 2 S-adenosyl-L-methionine + 4 H(+) = [[Fe-S] cluster scaffold protein] + N(6)-[(R)-dihydrolipoyl]-L-lysyl-[protein] + 4 Fe(3+) + 2 hydrogen sulfide + 2 5'-deoxyadenosine + 2 L-methionine + 2 reduced [2Fe-2S]-[ferredoxin]. It participates in protein modification; protein lipoylation via endogenous pathway; protein N(6)-(lipoyl)lysine from octanoyl-[acyl-carrier-protein]: step 2/2. Functionally, catalyzes the radical-mediated insertion of two sulfur atoms into the C-6 and C-8 positions of the octanoyl moiety bound to the lipoyl domains of lipoate-dependent enzymes, thereby converting the octanoylated domains into lipoylated derivatives. In Trypanosoma cruzi (strain CL Brener), this protein is Lipoyl synthase 1, mitochondrial.